A 311-amino-acid chain; its full sequence is Tricarboxylate transport protein, mitochondrial (311 aa).

Positions 1–13 (MPAPRAPRALAAA) are cleaved as a propeptide — removed in mature form. Solcar repeat units follow at residues 23–111 (THPG…LSNH), 122–208 (TRGL…LRNW), and 218–303 (MNPL…VVKL). 3 helical membrane-spanning segments follow: residues 29-46 (ILAGGLAGGIEICITFPT), 86-105 (GLSSLLYGSIPKAAVRFGMF), and 129-143 (LGAGVAEAVVVVCPM). Position 156 is a phosphoserine (serine 156). Transmembrane regions (helical) follow at residues 183 to 202 (GLTATVLKQGSNQAIRFFVM), 224 to 241 (GVFGAIAGAASVFGNTPL), and 278 to 297 (GTVPRLGRVCLDVAIVFVIY).

The protein belongs to the mitochondrial carrier (TC 2.A.29) family. Possesses a short cleavable presequence, which, however, is found to be dispensable both for targeting to mitochondria and insertion into the inner membrane. However, the presequence is required to keep SLC25A1 in a soluble state and thus in an import-competent state. Mature SLC25A1 lacking the presequence is prone to aggregation.

It localises to the mitochondrion inner membrane. The enzyme catalyses (S)-malate(in) + citrate(out) = (S)-malate(out) + citrate(in). It catalyses the reaction D-threo-isocitrate(in) + citrate(out) = D-threo-isocitrate(out) + citrate(in). The catalysed reaction is citrate(out) + succinate(in) = citrate(in) + succinate(out). It carries out the reaction cis-aconitate(in) + citrate(out) = cis-aconitate(out) + citrate(in). The enzyme catalyses trans-aconitate(in) + citrate(out) = trans-aconitate(out) + citrate(in). It catalyses the reaction phosphoenolpyruvate(in) + citrate(out) = phosphoenolpyruvate(out) + citrate(in). The catalysed reaction is maleate(in) + citrate(out) = maleate(out) + citrate(in). Its function is as follows. Mitochondrial electroneutral antiporter that exports citrate from the mitochondria into the cytosol in exchange for malate. Also able to mediate the exchange of citrate for isocitrate, phosphoenolpyruvate, cis-aconitate and to a lesser extent trans-aconitate, maleate and succinate. In the cytoplasm, citrate plays important roles in fatty acid and sterol synthesis, regulation of glycolysis, protein acetylation, and other physiopathological processes. The polypeptide is Tricarboxylate transport protein, mitochondrial (SLC25A1) (Homo sapiens (Human)).